Consider the following 294-residue polypeptide: tRNA dimethylallyltransferase (294 aa).

An ATP-binding site is contributed by 10 to 17; that stretch reads GPTAVGKT. Residue 12-17 participates in substrate binding; it reads TAVGKT. Residues 35 to 38 form an interaction with substrate tRNA region; that stretch reads DSQQ.

It belongs to the IPP transferase family. As to quaternary structure, monomer. Mg(2+) is required as a cofactor.

It catalyses the reaction adenosine(37) in tRNA + dimethylallyl diphosphate = N(6)-dimethylallyladenosine(37) in tRNA + diphosphate. Catalyzes the transfer of a dimethylallyl group onto the adenine at position 37 in tRNAs that read codons beginning with uridine, leading to the formation of N6-(dimethylallyl)adenosine (i(6)A). This is tRNA dimethylallyltransferase from Streptococcus suis (strain 98HAH33).